The primary structure comprises 177 residues: Large ribosomal subunit protein uL6 (177 aa).

This sequence belongs to the universal ribosomal protein uL6 family. In terms of assembly, part of the 50S ribosomal subunit.

This protein binds to the 23S rRNA, and is important in its secondary structure. It is located near the subunit interface in the base of the L7/L12 stalk, and near the tRNA binding site of the peptidyltransferase center. In Brucella canis (strain ATCC 23365 / NCTC 10854 / RM-666), this protein is Large ribosomal subunit protein uL6.